Consider the following 22-residue polypeptide: Fuctinin-1 (22 aa).

The interval 1 to 22 (SASPGLPKGEKEQQEAIEHIDE) is disordered. Basic and acidic residues predominate over residues 8 to 22 (KGEKEQQEAIEHIDE).

This sequence to human SET/PHAPII protein. Oligomer.

It is found in the cytoplasm. Functionally, has a role in the physiological regulation of fucosylation processes. This is Fuctinin-1 from Rattus norvegicus (Rat).